A 331-amino-acid polypeptide reads, in one-letter code: MPEILDQARTQVLENGVGLDEAGALAVLNLPDEHLPAALQLAHEVRMRWCGPEVEVEGIVSLKTGGCPEDCHFCSQSGLFTSPVRAVWLDIPSLVEAAKQTAKTGATEFCIVAAVRGPDDRLMRQLREGVAAIRAEVDIHVAASVGMLTQEQVDELVEMGVHRYNHNLETCRSYFPNVVTTHSWEERWETLRMVRASGMEVCCGGILGLGETVEQRAEFAAQLAELDPHEVPLNFLNPRPGTPLGDRPVVEGKDALRAIAAFRLAMPRTILRYAGGREITLGDLGTRSGLLGGINAVIVGNYLTTLGRPATTDLELLDDLKMPVKALSATL.

The Radical SAM core domain occupies 52-277 (PEVEVEGIVS…RTILRYAGGR (226 aa)). [4Fe-4S] cluster is bound by residues Cys-67, Cys-71, and Cys-74. [2Fe-2S] cluster contacts are provided by Cys-110, Cys-202, and Arg-272.

This sequence belongs to the radical SAM superfamily. Biotin synthase family. As to quaternary structure, homodimer. [4Fe-4S] cluster is required as a cofactor. It depends on [2Fe-2S] cluster as a cofactor.

The catalysed reaction is (4R,5S)-dethiobiotin + (sulfur carrier)-SH + 2 reduced [2Fe-2S]-[ferredoxin] + 2 S-adenosyl-L-methionine = (sulfur carrier)-H + biotin + 2 5'-deoxyadenosine + 2 L-methionine + 2 oxidized [2Fe-2S]-[ferredoxin]. It participates in cofactor biosynthesis; biotin biosynthesis; biotin from 7,8-diaminononanoate: step 2/2. Its function is as follows. Catalyzes the conversion of dethiobiotin (DTB) to biotin by the insertion of a sulfur atom into dethiobiotin via a radical-based mechanism. This Salinispora arenicola (strain CNS-205) protein is Biotin synthase.